The primary structure comprises 338 residues: tRNA-specific 2-thiouridylase MnmA (338 aa).

ATP is bound by residues 6–13 (AMSGGVDS) and Met-32. Cys-92 (nucleophile) is an active-site residue. An intrachain disulfide couples Cys-92 to Cys-186. Position 116 (Gly-116) interacts with ATP. An interaction with tRNA region spans residues 134 to 136 (KDQ). Cys-186 functions as the Cysteine persulfide intermediate in the catalytic mechanism. The interaction with tRNA stretch occupies residues 288-289 (RY).

It belongs to the MnmA/TRMU family.

It localises to the cytoplasm. It catalyses the reaction S-sulfanyl-L-cysteinyl-[protein] + uridine(34) in tRNA + AH2 + ATP = 2-thiouridine(34) in tRNA + L-cysteinyl-[protein] + A + AMP + diphosphate + H(+). Catalyzes the 2-thiolation of uridine at the wobble position (U34) of tRNA, leading to the formation of s(2)U34. This is tRNA-specific 2-thiouridylase MnmA from Campylobacter jejuni subsp. jejuni serotype O:6 (strain 81116 / NCTC 11828).